Consider the following 1119-residue polypeptide: Isoleucine--tRNA ligase (1119 aa).

Residues 1-43 (MVPRRSRQRPASSCRTAKTARREMPYPLPAPDGQEPEAQPVTP) form a disordered region. Residues 84–94 (PFANGLPHYGH) carry the 'HIGH' region motif. The short motif at 676 to 680 (KVSKS) is the 'KMSKS' region element. Lys-679 serves as a coordination point for ATP.

Belongs to the class-I aminoacyl-tRNA synthetase family. IleS type 2 subfamily. In terms of assembly, monomer. The cofactor is Zn(2+).

It localises to the cytoplasm. It carries out the reaction tRNA(Ile) + L-isoleucine + ATP = L-isoleucyl-tRNA(Ile) + AMP + diphosphate. Functionally, catalyzes the attachment of isoleucine to tRNA(Ile). As IleRS can inadvertently accommodate and process structurally similar amino acids such as valine, to avoid such errors it has two additional distinct tRNA(Ile)-dependent editing activities. One activity is designated as 'pretransfer' editing and involves the hydrolysis of activated Val-AMP. The other activity is designated 'posttransfer' editing and involves deacylation of mischarged Val-tRNA(Ile). The chain is Isoleucine--tRNA ligase from Leifsonia xyli subsp. xyli (strain CTCB07).